A 369-amino-acid polypeptide reads, in one-letter code: 2-aminoethylphosphonate--pyruvate transaminase (369 aa).

At lysine 193 the chain carries N6-(pyridoxal phosphate)lysine.

The protein belongs to the class-V pyridoxal-phosphate-dependent aminotransferase family. PhnW subfamily. As to quaternary structure, homodimer. Requires pyridoxal 5'-phosphate as cofactor.

It catalyses the reaction (2-aminoethyl)phosphonate + pyruvate = phosphonoacetaldehyde + L-alanine. Functionally, involved in phosphonate degradation. This is 2-aminoethylphosphonate--pyruvate transaminase from Pseudomonas fluorescens (strain Pf0-1).